A 232-amino-acid polypeptide reads, in one-letter code: MASSSDSWMRAYNEALKLSEEINGMISERSSSAVTGPDAQRRASAIRRKITIFGNKLDSLQSLLAEIHGKPISEKEMNRRKDMVGNLRSKANQMANALNMSNFANRDSLLGPDIKPDDSMSRVTGMDNQGIVGYQRQVMREQDEGLEQLEGTVMSTKHIALAVSEELDLQTRLIDDLDYHVDVTDSRLRRVQKSLAVMNKNMRSGCSCMSMLLSVLGIVGLAVVIWMLVKYM.

Over M1 to C208 the chain is Cytoplasmic. The t-SNARE coiled-coil homology domain occupies R136–M198. A helical; Anchor for type IV membrane protein membrane pass occupies residues M209–V229. Residues K230–M232 lie on the Vesicular side of the membrane.

The protein belongs to the syntaxin family. Interacts with VTI11 and either SYP21, or SYP22, or SYP61 in the prevacuolar compartment, or with VTI12 and SYP61 in the trans-Golgi network to form t-SNARE complexes. As to expression, expressed in root, leaf, stem, flower and silique.

The protein localises to the golgi apparatus. The protein resides in the trans-Golgi network membrane. It localises to the prevacuolar compartment membrane. Vesicle trafficking protein that functions in the secretory pathway. This is Syntaxin-51 (SYP51) from Arabidopsis thaliana (Mouse-ear cress).